The primary structure comprises 431 residues: Serine--tRNA ligase (431 aa).

The disordered stretch occupies residues 41-66 (QSRTQELQAERNARSKSIGEAARRGE). 240-242 (TSE) contacts L-serine. Residue 271–273 (RSE) coordinates ATP. L-serine is bound at residue E294. ATP is bound at residue 358 to 361 (EISS). S392 is an L-serine binding site.

Belongs to the class-II aminoacyl-tRNA synthetase family. Type-1 seryl-tRNA synthetase subfamily. In terms of assembly, homodimer. The tRNA molecule binds across the dimer.

Its subcellular location is the cytoplasm. It carries out the reaction tRNA(Ser) + L-serine + ATP = L-seryl-tRNA(Ser) + AMP + diphosphate + H(+). The enzyme catalyses tRNA(Sec) + L-serine + ATP = L-seryl-tRNA(Sec) + AMP + diphosphate + H(+). Its pathway is aminoacyl-tRNA biosynthesis; selenocysteinyl-tRNA(Sec) biosynthesis; L-seryl-tRNA(Sec) from L-serine and tRNA(Sec): step 1/1. Its function is as follows. Catalyzes the attachment of serine to tRNA(Ser). Is also able to aminoacylate tRNA(Sec) with serine, to form the misacylated tRNA L-seryl-tRNA(Sec), which will be further converted into selenocysteinyl-tRNA(Sec). This chain is Serine--tRNA ligase, found in Aeromonas salmonicida (strain A449).